A 783-amino-acid chain; its full sequence is Endonuclease MutS2 (783 aa).

328–335 (GPNTGGKT) lines the ATP pocket. Residues 708 to 783 (LDLRGKRYEE…GSGCTIATLG (76 aa)) enclose the Smr domain.

Belongs to the DNA mismatch repair MutS family. MutS2 subfamily. Homodimer. Binds to stalled ribosomes, contacting rRNA.

Functionally, endonuclease that is involved in the suppression of homologous recombination and thus may have a key role in the control of bacterial genetic diversity. In terms of biological role, acts as a ribosome collision sensor, splitting the ribosome into its 2 subunits. Detects stalled/collided 70S ribosomes which it binds and splits by an ATP-hydrolysis driven conformational change. Acts upstream of the ribosome quality control system (RQC), a ribosome-associated complex that mediates the extraction of incompletely synthesized nascent chains from stalled ribosomes and their subsequent degradation. Probably generates substrates for RQC. The protein is Endonuclease MutS2 of Streptococcus thermophilus (strain CNRZ 1066).